A 70-amino-acid polypeptide reads, in one-letter code: ATP synthase subunit epsilon, mitochondrial (70 aa).

The protein belongs to the eukaryotic ATPase epsilon family. In terms of assembly, F-type ATPases have 2 components, CF(1) - the catalytic core - and CF(0) - the membrane proton channel. CF(1) has five subunits: alpha(3), beta(3), gamma(1), delta(1), epsilon(1). CF(0) has three main subunits: a, b and c.

It localises to the mitochondrion. The protein resides in the mitochondrion inner membrane. Functionally, mitochondrial membrane ATP synthase (F(1)F(0) ATP synthase or Complex V) produces ATP from ADP in the presence of a proton gradient across the membrane which is generated by electron transport complexes of the respiratory chain. F-type ATPases consist of two structural domains, F(1) - containing the extramembraneous catalytic core, and F(0) - containing the membrane proton channel, linked together by a central stalk and a peripheral stalk. During catalysis, ATP synthesis in the catalytic domain of F(1) is coupled via a rotary mechanism of the central stalk subunits to proton translocation. Part of the complex F(1) domain and of the central stalk which is part of the complex rotary element. Rotation of the central stalk against the surrounding alpha(3)beta(3) subunits leads to hydrolysis of ATP in three separate catalytic sites on the beta subunits. This chain is ATP synthase subunit epsilon, mitochondrial, found in Zea mays (Maize).